The sequence spans 121 residues: Large ribosomal subunit protein bL12 (121 aa).

It belongs to the bacterial ribosomal protein bL12 family. In terms of assembly, homodimer. Part of the ribosomal stalk of the 50S ribosomal subunit. Forms a multimeric L10(L12)X complex, where L10 forms an elongated spine to which 2 to 4 L12 dimers bind in a sequential fashion. Binds GTP-bound translation factors.

Its function is as follows. Forms part of the ribosomal stalk which helps the ribosome interact with GTP-bound translation factors. Is thus essential for accurate translation. The sequence is that of Large ribosomal subunit protein bL12 from Clostridium novyi (strain NT).